We begin with the raw amino-acid sequence, 198 residues long: FMN-dependent NADH:quinone oxidoreductase (198 aa).

FMN contacts are provided by residues serine 10, 16–18, 94–97, and 138–141; these read SQS, MYNF, and TRGG.

Belongs to the azoreductase type 1 family. In terms of assembly, homodimer. It depends on FMN as a cofactor.

It carries out the reaction 2 a quinone + NADH + H(+) = 2 a 1,4-benzosemiquinone + NAD(+). The catalysed reaction is N,N-dimethyl-1,4-phenylenediamine + anthranilate + 2 NAD(+) = 2-(4-dimethylaminophenyl)diazenylbenzoate + 2 NADH + 2 H(+). In terms of biological role, quinone reductase that provides resistance to thiol-specific stress caused by electrophilic quinones. Also exhibits azoreductase activity. Catalyzes the reductive cleavage of the azo bond in aromatic azo compounds to the corresponding amines. This chain is FMN-dependent NADH:quinone oxidoreductase, found in Shewanella sp. (strain ANA-3).